The following is a 559-amino-acid chain: uncharacterized protein (559 aa).

Helical transmembrane passes span leucine 103–phenylalanine 123, phenylalanine 139–tyrosine 159, alanine 192–phenylalanine 212, phenylalanine 223–leucine 243, tryptophan 263–valine 283, methionine 302–alanine 322, alanine 348–aspartate 368, isoleucine 387–isoleucine 407, alanine 413–alanine 434, alanine 466–asparagine 486, and isoleucine 501–phenylalanine 521.

This sequence belongs to the purine-cytosine permease (2.A.39) family.

It localises to the golgi apparatus membrane. This is an uncharacterized protein from Schizosaccharomyces pombe (strain 972 / ATCC 24843) (Fission yeast).